The primary structure comprises 127 residues: Large ribosomal subunit protein bL20 (127 aa).

It belongs to the bacterial ribosomal protein bL20 family.

Binds directly to 23S ribosomal RNA and is necessary for the in vitro assembly process of the 50S ribosomal subunit. It is not involved in the protein synthesizing functions of that subunit. This chain is Large ribosomal subunit protein bL20 (rplT), found in Streptomyces coelicolor (strain ATCC BAA-471 / A3(2) / M145).